Here is a 550-residue protein sequence, read N- to C-terminus: U-box domain-containing protein 40 (550 aa).

Over residues Lys19–Leu29 the composition is skewed to basic and acidic residues. A disordered region spans residues Lys19–Lys55. Over residues Ser38–Ser52 the composition is skewed to low complexity. The 71-residue stretch at Glu57 to Pro127 folds into the U-box domain. 5 ARM repeats span residues Glu260–Leu299, Lys301–Leu340, Asp342–Leu381, Gln383–Ser420, and Pro422–His464.

It carries out the reaction S-ubiquitinyl-[E2 ubiquitin-conjugating enzyme]-L-cysteine + [acceptor protein]-L-lysine = [E2 ubiquitin-conjugating enzyme]-L-cysteine + N(6)-ubiquitinyl-[acceptor protein]-L-lysine.. It participates in protein modification; protein ubiquitination. Its function is as follows. Functions as an E3 ubiquitin ligase. The polypeptide is U-box domain-containing protein 40 (PUB40) (Arabidopsis thaliana (Mouse-ear cress)).